A 750-amino-acid polypeptide reads, in one-letter code: Pesticidal crystal protein Cry11Bb (750 aa).

A disordered region spans residues 672–750; it reads QGYNDNYNQN…NYNQNTSSGV (79 aa).

This sequence belongs to the delta endotoxin family.

Promotes colloidosmotic lysis by binding to the midgut epithelial cells of mosquito larvae such as Aedes aegypti, Anopheles albimanus and Culex quinquefasciatus. The chain is Pesticidal crystal protein Cry11Bb (cry11Bb) from Bacillus thuringiensis subsp. medellin.